A 459-amino-acid chain; its full sequence is Hemopexin (459 aa).

Residues Met1–Ala23 form the signal peptide. Disulfide bonds link Cys52–Cys232, Cys150–Cys155, and Cys189–Cys201. 4 Hemopexin repeats span residues Gly55 to Ala95, Pro96 to Ile140, Pro141 to Ala185, and Val186 to Cys232. Heme is bound at residue His81. His151 provides a ligand contact to heme. An N-linked (GlcNAc...) asparagine glycan is attached at Asn188. N-linked (GlcNAc...) asparagine glycosylation is present at Asn218. Position 237 (His237) interacts with heme. Asn241 carries an N-linked (GlcNAc...) asparagine glycan. Intrachain disulfides connect Cys250–Cys453, Cys359–Cys401, and Cys411–Cys428. Hemopexin repeat units follow at residues Pro252–Gly297, Pro298–Pro345, Leu350–Leu389, and His393–Ala444. His286 is a binding site for heme.

Belongs to the hemopexin family.

It localises to the secreted. In terms of biological role, binds heme and transports it to the liver for breakdown and iron recovery, after which the free hemopexin returns to the circulation. The sequence is that of Hemopexin (HPX) from Bos taurus (Bovine).